The primary structure comprises 439 residues: Mitochondrial distribution and morphology protein 10 (439 aa).

A disordered region spans residues 275–305 (LPDATPPSFQVPSSSSSSSNPVSPSTSQPPT). Low complexity predominate over residues 280–305 (PPSFQVPSSSSSSSNPVSPSTSQPPT).

This sequence belongs to the MDM10 family. As to quaternary structure, component of the ER-mitochondria encounter structure (ERMES) or MDM complex, composed of MMM1, MDM10, MDM12 and MDM34. Associates with the mitochondrial outer membrane sorting assembly machinery SAM(core) complex.

It is found in the mitochondrion outer membrane. Its function is as follows. Component of the ERMES/MDM complex, which serves as a molecular tether to connect the endoplasmic reticulum and mitochondria. Components of this complex are involved in the control of mitochondrial shape and protein biogenesis and may function in phospholipid exchange. MDM10 is involved in the late assembly steps of the general translocase of the mitochondrial outer membrane (TOM complex). Functions in the TOM40-specific route of the assembly of outer membrane beta-barrel proteins, including the association of TOM40 with the receptor TOM22 and small TOM proteins. Can associate with the SAM(core) complex as well as the MDM12-MMM1 complex, both involved in late steps of the major beta-barrel assembly pathway, that is responsible for biogenesis of all outer membrane beta-barrel proteins. May act as a switch that shuttles between both complexes and channels precursor proteins into the TOM40-specific pathway. Plays a role in mitochondrial morphology and in the inheritance of mitochondria. This chain is Mitochondrial distribution and morphology protein 10, found in Laccaria bicolor (strain S238N-H82 / ATCC MYA-4686) (Bicoloured deceiver).